Here is a 316-residue protein sequence, read N- to C-terminus: Ribosomal RNA small subunit methyltransferase H (316 aa).

S-adenosyl-L-methionine contacts are provided by residues 35 to 37, D55, F79, D101, and Q108; that span reads GGH.

Belongs to the methyltransferase superfamily. RsmH family.

Its subcellular location is the cytoplasm. The catalysed reaction is cytidine(1402) in 16S rRNA + S-adenosyl-L-methionine = N(4)-methylcytidine(1402) in 16S rRNA + S-adenosyl-L-homocysteine + H(+). In terms of biological role, specifically methylates the N4 position of cytidine in position 1402 (C1402) of 16S rRNA. The chain is Ribosomal RNA small subunit methyltransferase H from Vibrio campbellii (strain ATCC BAA-1116).